The sequence spans 454 residues: tRNA modification GTPase MnmE (454 aa).

3 residues coordinate (6S)-5-formyl-5,6,7,8-tetrahydrofolate: R23, E80, and K120. Residues 216–377 (GMKVVIAGRP…LRNHLKQSMG (162 aa)) form the TrmE-type G domain. Residue N226 coordinates K(+). Residues 226-231 (NAGKSS), 245-251 (TDIAGTT), 270-273 (DTAG), 335-338 (NKAD), and 358-360 (SAR) contribute to the GTP site. Residue S230 coordinates Mg(2+). Residues T245, I247, and T250 each coordinate K(+). T251 serves as a coordination point for Mg(2+). K454 is a (6S)-5-formyl-5,6,7,8-tetrahydrofolate binding site.

This sequence belongs to the TRAFAC class TrmE-Era-EngA-EngB-Septin-like GTPase superfamily. TrmE GTPase family. In terms of assembly, homodimer. Heterotetramer of two MnmE and two MnmG subunits. It depends on K(+) as a cofactor.

The protein resides in the cytoplasm. Its function is as follows. Exhibits a very high intrinsic GTPase hydrolysis rate. Involved in the addition of a carboxymethylaminomethyl (cmnm) group at the wobble position (U34) of certain tRNAs, forming tRNA-cmnm(5)s(2)U34. The sequence is that of tRNA modification GTPase MnmE from Escherichia coli (strain SMS-3-5 / SECEC).